The primary structure comprises 360 residues: Phospho-N-acetylmuramoyl-pentapeptide-transferase (360 aa).

The next 10 helical transmembrane spans lie at alanine 26–alanine 46, proline 72–tyrosine 92, serine 94–valine 114, tryptophan 132–glycine 152, valine 168–glycine 188, glycine 199–threonine 219, alanine 236–phenylalanine 256, valine 263–leucine 283, phenylalanine 288–valine 308, and valine 338–lysine 358.

This sequence belongs to the glycosyltransferase 4 family. MraY subfamily. It depends on Mg(2+) as a cofactor.

It is found in the cell inner membrane. It catalyses the reaction UDP-N-acetyl-alpha-D-muramoyl-L-alanyl-gamma-D-glutamyl-meso-2,6-diaminopimeloyl-D-alanyl-D-alanine + di-trans,octa-cis-undecaprenyl phosphate = di-trans,octa-cis-undecaprenyl diphospho-N-acetyl-alpha-D-muramoyl-L-alanyl-D-glutamyl-meso-2,6-diaminopimeloyl-D-alanyl-D-alanine + UMP. The protein operates within cell wall biogenesis; peptidoglycan biosynthesis. Catalyzes the initial step of the lipid cycle reactions in the biosynthesis of the cell wall peptidoglycan: transfers peptidoglycan precursor phospho-MurNAc-pentapeptide from UDP-MurNAc-pentapeptide onto the lipid carrier undecaprenyl phosphate, yielding undecaprenyl-pyrophosphoryl-MurNAc-pentapeptide, known as lipid I. This chain is Phospho-N-acetylmuramoyl-pentapeptide-transferase, found in Cronobacter sakazakii (strain ATCC BAA-894) (Enterobacter sakazakii).